Here is a 280-residue protein sequence, read N- to C-terminus: Large ribosomal subunit protein uL2 (280 aa).

The segment at valine 223 to arginine 280 is disordered. Residues lysine 254–arginine 280 are compositionally biased toward basic residues.

This sequence belongs to the universal ribosomal protein uL2 family. In terms of assembly, part of the 50S ribosomal subunit. Forms a bridge to the 30S subunit in the 70S ribosome.

Its function is as follows. One of the primary rRNA binding proteins. Required for association of the 30S and 50S subunits to form the 70S ribosome, for tRNA binding and peptide bond formation. It has been suggested to have peptidyltransferase activity; this is somewhat controversial. Makes several contacts with the 16S rRNA in the 70S ribosome. This chain is Large ribosomal subunit protein uL2, found in Dinoroseobacter shibae (strain DSM 16493 / NCIMB 14021 / DFL 12).